Here is a 244-residue protein sequence, read N- to C-terminus: Futalosine hydrolase (244 aa).

This sequence belongs to the PNP/UDP phosphorylase family. Futalosine hydrolase subfamily.

It carries out the reaction futalosine + H2O = dehypoxanthine futalosine + hypoxanthine. It functions in the pathway quinol/quinone metabolism; menaquinone biosynthesis. Its function is as follows. Catalyzes the hydrolysis of futalosine (FL) to dehypoxanthine futalosine (DHFL) and hypoxanthine, a step in the biosynthesis of menaquinone (MK, vitamin K2). Cannot directly use aminodeoxyfutalosine (AFL) as a substrate. This chain is Futalosine hydrolase, found in Acidothermus cellulolyticus (strain ATCC 43068 / DSM 8971 / 11B).